The primary structure comprises 257 residues: uncharacterized protein (257 aa).

An N-terminal signal peptide occupies residues 1–26; the sequence is MKKAFILSAAAAVGLFTFGGVQQASA. Positions 80-135 are disordered; that stretch reads AKQSNVKVQDVQKTETAKPAQKTTEKAAADQNTASKAPATAEKTNTTTSAPSSVSA. Positions 121–134 are enriched in polar residues; it reads EKTNTTTSAPSSVS. Residues 141–254 enclose the SCP domain; sequence VELTNAERQK…ESGSIWTQQF (114 aa).

This is an uncharacterized protein from Bacillus subtilis (strain 168).